A 473-amino-acid polypeptide reads, in one-letter code: Hyaluronidase-2 (473 aa).

Residues 1 to 20 (MWTGLGPAVTLALVLVVAWA) form the signal peptide. Disulfide bonds link C47–C343 and C214–C230. N-linked (GlcNAc...) asparagine glycans are attached at residues N77 and N106. The active-site Proton donor is E138. N-linked (GlcNAc...) asparagine glycosylation is found at N340 and N360. The 79-residue stretch at 364-442 (AAQYCSWAQC…YLGWGGEQCQ (79 aa)) folds into the EGF-like domain. 3 disulfides stabilise this stretch: C368-C379, C373-C430, and C432-C441. G451 carries GPI-anchor amidated glycine lipidation. Positions 452 to 473 (ASGAWAGSHLTGLLAVAVLAFT) are cleaved as a propeptide — removed in mature form.

This sequence belongs to the glycosyl hydrolase 56 family. In terms of assembly, interacts with MST1R.

It localises to the cell membrane. The enzyme catalyses Random hydrolysis of (1-&gt;4)-linkages between N-acetyl-beta-D-glucosamine and D-glucuronate residues in hyaluronate.. In terms of biological role, catalyzes hyaluronan degradation into small fragments that are endocytosed and degraded in lysosomes by HYAL1 and exoglycosidases. Essential for the breakdown of extracellular matrix hyaluronan. This Bos taurus (Bovine) protein is Hyaluronidase-2 (HYAL2).